Here is an 835-residue protein sequence, read N- to C-terminus: Translation initiation factor IF-2 (835 aa).

The interval 1-243 (MSDTDGKKTL…RARQKAMGGA (243 aa)) is disordered. The span at 43–67 (VPKPGAGKPSAGGSSPAGDPSRRPA) shows a compositional bias: low complexity. Basic and acidic residues-rich tracts occupy residues 85 to 147 (KARE…EAKR), 157 to 166 (EAPKAERSAE), and 175 to 205 (EGGD…DGRR). Residues 332-500 (PRPPVITIMG…AIALQAEILE (169 aa)) enclose the tr-type G domain. The G1 stretch occupies residues 341–348 (GHVDHGKT). GTP is bound at residue 341–348 (GHVDHGKT). The G2 stretch occupies residues 366–370 (GITQH). The G3 stretch occupies residues 388 to 391 (DTPG). Residues 388 to 392 (DTPGH) and 442 to 445 (NKID) contribute to the GTP site. Positions 442–445 (NKID) are G4. The segment at 478–480 (SAK) is G5.

This sequence belongs to the TRAFAC class translation factor GTPase superfamily. Classic translation factor GTPase family. IF-2 subfamily.

The protein resides in the cytoplasm. One of the essential components for the initiation of protein synthesis. Protects formylmethionyl-tRNA from spontaneous hydrolysis and promotes its binding to the 30S ribosomal subunits. Also involved in the hydrolysis of GTP during the formation of the 70S ribosomal complex. The chain is Translation initiation factor IF-2 from Ruegeria pomeroyi (strain ATCC 700808 / DSM 15171 / DSS-3) (Silicibacter pomeroyi).